Here is a 622-residue protein sequence, read N- to C-terminus: Iron transport multicopper oxidase FET5 (622 aa).

Residues 1–18 (MLFYSFVWSVLAASVALA) form the signal peptide. Residues 19–573 (KTHKLNYTAS…PKGFTTEGYL (555 aa)) are Extracellular-facing. N-linked (GlcNAc...) asparagine glycosylation is present at asparagine 24. Plastocyanin-like domains are found at residues 43 to 146 (IGFN…FIIH) and 192 to 301 (NILF…IQMR). Cu cation is bound by residues histidine 79 and histidine 81. Residues asparagine 86 and asparagine 115 are each glycosylated (N-linked (GlcNAc...) asparagine). Histidine 128 and histidine 130 together coordinate Cu cation. Residues asparagine 196, asparagine 200, asparagine 246, asparagine 295, and asparagine 364 are each glycosylated (N-linked (GlcNAc...) asparagine). Positions 392–514 (GDNINAQLLK…QGLASVFIEA (123 aa)) constitute a Plastocyanin-like 3 domain. 3 residues coordinate Cu cation: histidine 418, histidine 421, and histidine 423. Asparagine 455 carries an N-linked (GlcNAc...) asparagine glycan. The Cu cation site is built by histidine 496, cysteine 497, histidine 498, and histidine 502. Residues 574-594 (ALIISTIIGVWGLYSIAQYGI) form a helical membrane-spanning segment. At 595–622 (GEVIPNDEKVYHTLREILAENEIEVSRG) the chain is on the cytoplasmic side.

It belongs to the multicopper oxidase family. Interacts with FTH1. Cu cation serves as cofactor.

The protein resides in the cell membrane. Its function is as follows. Iron transport multicopper oxidase, which is required for Fe(2+) high affinity uptake. May be required to oxidize Fe(2+) and release it from the transporter. Essential component of copper-dependent iron transport. In Saccharomyces cerevisiae (strain ATCC 204508 / S288c) (Baker's yeast), this protein is Iron transport multicopper oxidase FET5 (FET5).